The chain runs to 231 residues: Large ribosomal subunit protein uL1 (231 aa).

This sequence belongs to the universal ribosomal protein uL1 family. Part of the 50S ribosomal subunit.

In terms of biological role, binds directly to 23S rRNA. The L1 stalk is quite mobile in the ribosome, and is involved in E site tRNA release. Functionally, protein L1 is also a translational repressor protein, it controls the translation of the L11 operon by binding to its mRNA. The sequence is that of Large ribosomal subunit protein uL1 from Acetivibrio thermocellus (strain ATCC 27405 / DSM 1237 / JCM 9322 / NBRC 103400 / NCIMB 10682 / NRRL B-4536 / VPI 7372) (Clostridium thermocellum).